We begin with the raw amino-acid sequence, 240 residues long: UDP-2,3-diacylglucosamine hydrolase (240 aa).

Residues aspartate 8, histidine 10, aspartate 41, asparagine 79, and histidine 114 each coordinate Mn(2+). A substrate-binding site is contributed by 79-80; it reads NR. 5 residues coordinate substrate: aspartate 122, serine 160, asparagine 164, lysine 167, and histidine 195. Mn(2+)-binding residues include histidine 195 and histidine 197.

The protein belongs to the LpxH family. Mn(2+) is required as a cofactor.

The protein resides in the cell inner membrane. It catalyses the reaction UDP-2-N,3-O-bis[(3R)-3-hydroxytetradecanoyl]-alpha-D-glucosamine + H2O = 2-N,3-O-bis[(3R)-3-hydroxytetradecanoyl]-alpha-D-glucosaminyl 1-phosphate + UMP + 2 H(+). The protein operates within glycolipid biosynthesis; lipid IV(A) biosynthesis; lipid IV(A) from (3R)-3-hydroxytetradecanoyl-[acyl-carrier-protein] and UDP-N-acetyl-alpha-D-glucosamine: step 4/6. Its function is as follows. Hydrolyzes the pyrophosphate bond of UDP-2,3-diacylglucosamine to yield 2,3-diacylglucosamine 1-phosphate (lipid X) and UMP by catalyzing the attack of water at the alpha-P atom. Involved in the biosynthesis of lipid A, a phosphorylated glycolipid that anchors the lipopolysaccharide to the outer membrane of the cell. The chain is UDP-2,3-diacylglucosamine hydrolase from Photorhabdus laumondii subsp. laumondii (strain DSM 15139 / CIP 105565 / TT01) (Photorhabdus luminescens subsp. laumondii).